The chain runs to 91 residues: Large ribosomal subunit protein bL27 (91 aa).

A disordered region spans residues 1–25; that stretch reads MAHKKGAASSNNGRDSESKRLGVKR.

The protein belongs to the bacterial ribosomal protein bL27 family.

The sequence is that of Large ribosomal subunit protein bL27 from Corynebacterium kroppenstedtii (strain DSM 44385 / JCM 11950 / CIP 105744 / CCUG 35717).